The following is a 391-amino-acid chain: Aspartic protease 17 (391 aa).

An N-terminal signal peptide occupies residues Met-1–Ala-15. Residues Tyr-65 to Ala-385 enclose the Peptidase A1 domain. Asn-68 carries N-linked (GlcNAc...) asparagine glycosylation. Asp-83 is a catalytic residue. Residue Asn-108 is glycosylated (N-linked (GlcNAc...) asparagine). Asp-274 is a catalytic residue. An intrachain disulfide couples Cys-309 to Cys-345.

It belongs to the peptidase A1 family. Expressed in intestinal cells.

Its subcellular location is the secreted. Aspartic proteinase. This Caenorhabditis elegans protein is Aspartic protease 17.